Reading from the N-terminus, the 92-residue chain is Transcription factor ILI6 (92 aa).

The segment at 1–20 (MSSRRSRSRQSGSSRITDEQ) is disordered. A bHLH domain is found at 5–59 (RSRSRQSGSSRITDEQISDLVSKLQDLLPEARLRSNDRVPSSRVLQETCNYIRSL).

It belongs to the bHLH protein family. Interacts with APG.

It localises to the nucleus. Atypical and probable non DNA-binding bHLH transcription factor that acts as a positive regulator of grain size. Binds the transcription repressor APG and forms a heterodimer of antagonistic bHLH transcription factors that regulates grain length and weight by controlling cell elongation in lemma and palea. May be involved in the control of lamina inclination through brassinosteroid signaling pathway. The chain is Transcription factor ILI6 (ILI6) from Oryza sativa subsp. indica (Rice).